The sequence spans 210 residues: Large ribosomal subunit protein uL3 (210 aa).

The protein belongs to the universal ribosomal protein uL3 family. In terms of assembly, part of the 50S ribosomal subunit. Forms a cluster with proteins L14 and L19.

One of the primary rRNA binding proteins, it binds directly near the 3'-end of the 23S rRNA, where it nucleates assembly of the 50S subunit. In Natranaerobius thermophilus (strain ATCC BAA-1301 / DSM 18059 / JW/NM-WN-LF), this protein is Large ribosomal subunit protein uL3.